A 433-amino-acid chain; its full sequence is Putative ankyrin repeat protein R784 (433 aa).

ANK repeat units follow at residues 44–70 (NQNLVLECAIEVDNIYIINKLIDKTDV), 71–101 (NGLKFVMRWSALHGSFQIIKSIIRKDHNNDL), 102–131 (LDLHAINWSIESNHLHISKYLIDKYNIVII), 179–205 (FYDSMIELACLYGHVHVVQYFIDNQCS), 206–235 (VRQKWLYYSCLSGNFDLVKLLCKNGCRIFS), 237–264 (RRLINTAITGGNLDIVRYCLLHSKIDLA), 265–294 (QNNFAMKIAIKTGHIGIVRLLVSHGSDIHF), 296–321 (NGECMIIASRGGFANIVKFFLENKVY), 322–351 (MSEKVLKIAAIRGYLDIIKVFIKYASACMS), and 380–409 (NMRKILIWSLINNRINIVTYLLEIFPKLRE).

This chain is Putative ankyrin repeat protein R784, found in Acanthamoeba polyphaga mimivirus (APMV).